The primary structure comprises 218 residues: Pyridoxine/pyridoxamine 5'-phosphate oxidase (218 aa).

Substrate-binding positions include 14–17 (RREY) and lysine 72. FMN is bound by residues 67 to 72 (RIVLLK), 82 to 83 (YT), arginine 88, lysine 89, and glutamine 111. Substrate is bound by residues tyrosine 129, arginine 133, and serine 137. FMN is bound by residues 146–147 (QS) and tryptophan 191. A substrate-binding site is contributed by 197–199 (RLH). Arginine 201 lines the FMN pocket.

It belongs to the pyridoxamine 5'-phosphate oxidase family. As to quaternary structure, homodimer. FMN is required as a cofactor.

It catalyses the reaction pyridoxamine 5'-phosphate + O2 + H2O = pyridoxal 5'-phosphate + H2O2 + NH4(+). It carries out the reaction pyridoxine 5'-phosphate + O2 = pyridoxal 5'-phosphate + H2O2. Its pathway is cofactor metabolism; pyridoxal 5'-phosphate salvage; pyridoxal 5'-phosphate from pyridoxamine 5'-phosphate: step 1/1. It participates in cofactor metabolism; pyridoxal 5'-phosphate salvage; pyridoxal 5'-phosphate from pyridoxine 5'-phosphate: step 1/1. Catalyzes the oxidation of either pyridoxine 5'-phosphate (PNP) or pyridoxamine 5'-phosphate (PMP) into pyridoxal 5'-phosphate (PLP). The protein is Pyridoxine/pyridoxamine 5'-phosphate oxidase of Escherichia coli O127:H6 (strain E2348/69 / EPEC).